The sequence spans 431 residues: Beta-lactamase hydrolase-like protein (431 aa).

The Zn(2+) site is built by His-212, His-214, and His-286. Asp-309 serves as a coordination point for substrate.

The protein belongs to the metallo-beta-lactamase superfamily. The cofactor is Zn(2+).

Could play a role in cell adherence or biofilm development. The chain is Beta-lactamase hydrolase-like protein from Xylella fastidiosa (strain Temecula1 / ATCC 700964).